The primary structure comprises 59 residues: Dendroaspin (59 aa).

Cystine bridges form between C3–C22, C17–C37, C39–C51, and C52–C57. The Cell attachment site motif lies at 43–45 (RGD).

It belongs to the three-finger toxin family. Short-chain subfamily. Antiplatelet toxin sub-subfamily. Expressed by the venom gland.

The protein localises to the secreted. In terms of biological role, inhibits ADP-induced platelet aggregation and inhibits the binding of purified platelet fibrinogen receptor alpha-IIb/beta-3 (ITGA2B/ITGB3) to immobilized fibrinogen. Has also been described to inhibit cell adhesion to fibrinogen, fibronectin, laminin and collagen. This chain is Dendroaspin, found in Dendroaspis jamesoni kaimosae (Eastern Jameson's mamba).